The chain runs to 359 residues: Lipopolysaccharide 1,6-galactosyltransferase (359 aa).

UDP is bound by residues Gln242 and Glu274.

It belongs to the glycosyltransferase group 1 family. Glycosyltransferase 4 subfamily.

The enzyme catalyses alpha-D-Glc-(1-&gt;3)-[L-alpha-D-Hep-(1-&gt;7)]-4-O-PO3(2-)-L-alpha-D-Hep-(1-&gt;3)-4-O-PO3(2-)-L-alpha-D-Hep-(1-&gt;5)-[alpha-Kdo-(2-&gt;4)]-alpha-Kdo-(2-&gt;6)-lipid A + UDP-alpha-D-galactose = alpha-D-Gal-(1-&gt;6)-alpha-D-Glc-(1-&gt;3)-[L-alpha-D-Hep-(1-&gt;7)]-4-O-PO3(2-)-L-alpha-D-Hep-(1-&gt;3)-4-O-PO3(2-)-L-alpha-D-Hep-(1-&gt;5)-[alpha-Kdo-(2-&gt;4)]-alpha-Kdo-(2-&gt;6)-lipid A + UDP + H(+). It participates in bacterial outer membrane biogenesis; LPS core biosynthesis. Galactosyltransferase involved in the biosynthesis of the core oligosaccharide region of lipopolysaccharide (LPS). Catalyzes the addition of galactose from UDP-galactose to the first glucose residue of the LPS outer core. Cannot use other sugar donors, such as UDP-glucose, UDP-glucuronic acid, UDP-galacuronic acid, GDP-mannose, ADP-glucose and GDP-glucose. In the absence of a lipid acceptor, can hydrolyze UDP-galactose to UDP and galactose. This Escherichia coli (strain K12) protein is Lipopolysaccharide 1,6-galactosyltransferase.